A 459-amino-acid chain; its full sequence is Probable rhamnogalacturonase C (459 aa).

The first 18 residues, 1-18 (MRASILPLTLFLATLAGA), serve as a signal peptide directing secretion. N-linked (GlcNAc...) asparagine glycosylation is found at N36, N64, N77, N140, and N155. An intrachain disulfide couples C39 to C65. The active-site Proton donor is the D216. An intrachain disulfide couples C218 to C235. 2 N-linked (GlcNAc...) asparagine glycosylation sites follow: N236 and N251. H290 is an active-site residue. The N-linked (GlcNAc...) asparagine glycan is linked to N315. A disulfide bridge connects residues C337 and C343. The N-linked (GlcNAc...) asparagine glycan is linked to N356. Cysteines 365 and 374 form a disulfide.

This sequence belongs to the glycosyl hydrolase 28 family.

The protein localises to the secreted. Functionally, pectinolytic enzymes consist of four classes of enzymes: pectine lyase, polygalacturonase, pectin methylesterase and rhamnogalacturonase. Hydrolyzes alpha-D-galacturonopyranosyl-(1,2)-alpha-L-rhamnopyranosyl linkages in the backbone of the hairy regions of pectins. This is Probable rhamnogalacturonase C (rhgC) from Aspergillus niger (strain ATCC MYA-4892 / CBS 513.88 / FGSC A1513).